A 58-amino-acid chain; its full sequence is uncharacterized protein (58 aa).

This is an uncharacterized protein from Phaseolus vulgaris (Kidney bean).